We begin with the raw amino-acid sequence, 283 residues long: Acetylglutamate kinase (283 aa).

Substrate is bound by residues 63-64 (GG), R85, and N178.

The protein belongs to the acetylglutamate kinase family. ArgB subfamily.

The protein localises to the cytoplasm. It catalyses the reaction N-acetyl-L-glutamate + ATP = N-acetyl-L-glutamyl 5-phosphate + ADP. It participates in amino-acid biosynthesis; L-arginine biosynthesis; N(2)-acetyl-L-ornithine from L-glutamate: step 2/4. In terms of biological role, catalyzes the ATP-dependent phosphorylation of N-acetyl-L-glutamate. In Prochlorococcus marinus (strain MIT 9301), this protein is Acetylglutamate kinase.